The following is a 475-amino-acid chain: Glutamate--tRNA ligase (475 aa).

Residues 9 to 19 (PSPTGYLHVGG) carry the 'HIGH' region motif. Residues 240-244 (KLSKR) carry the 'KMSKS' region motif. ATP is bound at residue Lys243.

This sequence belongs to the class-I aminoacyl-tRNA synthetase family. Glutamate--tRNA ligase type 1 subfamily. In terms of assembly, monomer.

Its subcellular location is the cytoplasm. The catalysed reaction is tRNA(Glu) + L-glutamate + ATP = L-glutamyl-tRNA(Glu) + AMP + diphosphate. In terms of biological role, catalyzes the attachment of glutamate to tRNA(Glu) in a two-step reaction: glutamate is first activated by ATP to form Glu-AMP and then transferred to the acceptor end of tRNA(Glu). The sequence is that of Glutamate--tRNA ligase from Vibrio campbellii (strain ATCC BAA-1116).